Here is a 241-residue protein sequence, read N- to C-terminus: Probable pectate lyase D (241 aa).

Positions 1 to 17 (MYQKSLLFSLLATSALA) are cleaved as a signal peptide. N-linked (GlcNAc...) asparagine glycosylation is present at asparagine 215. Residues 215-241 (NNSGDEPEEVSEGPSDACQYSEPLSSC) are disordered.

It belongs to the polysaccharide lyase 3 family. Requires Ca(2+) as cofactor.

It localises to the secreted. The enzyme catalyses Eliminative cleavage of (1-&gt;4)-alpha-D-galacturonan to give oligosaccharides with 4-deoxy-alpha-D-galact-4-enuronosyl groups at their non-reducing ends.. Its function is as follows. Pectinolytic enzyme consist of four classes of enzymes: pectin lyase, polygalacturonase, pectin methylesterase and rhamnogalacturonase. Among pectinolytic enzymes, pectin lyase is the most important in depolymerization of pectin, since it cleaves internal glycosidic bonds of highly methylated pectins. Favors pectate, the anion, over pectin, the methyl ester. The polypeptide is Probable pectate lyase D (plyD) (Neosartorya fischeri (strain ATCC 1020 / DSM 3700 / CBS 544.65 / FGSC A1164 / JCM 1740 / NRRL 181 / WB 181) (Aspergillus fischerianus)).